A 211-amino-acid polypeptide reads, in one-letter code: MEEKKRELIRNLIAEGYIKRKEVAEAMMKVPRELFVPEELRHMAYEDTPLPIGAGQTISAPHMVAYMVEAAELRRGDKVLEVGTGSGYHAAVMAELVGPEGHVYTIERIPELAERARERLKALGYNNVTVLVGDGSKGYPPAAPYDKIIVTAAAKRVPEALLKQLKVGGIMVIPVEEEPGYQVLYKIIKTPEGYVIKKLLPVAFVPLIEEE.

Serine 59 is a catalytic residue.

Belongs to the methyltransferase superfamily. L-isoaspartyl/D-aspartyl protein methyltransferase family.

The protein resides in the cytoplasm. The catalysed reaction is [protein]-L-isoaspartate + S-adenosyl-L-methionine = [protein]-L-isoaspartate alpha-methyl ester + S-adenosyl-L-homocysteine. Functionally, catalyzes the methyl esterification of L-isoaspartyl residues in peptides and proteins that result from spontaneous decomposition of normal L-aspartyl and L-asparaginyl residues. It plays a role in the repair and/or degradation of damaged proteins. The chain is Protein-L-isoaspartate O-methyltransferase from Ignicoccus hospitalis (strain KIN4/I / DSM 18386 / JCM 14125).